Reading from the N-terminus, the 366-residue chain is Flagellar P-ring protein (366 aa).

The N-terminal stretch at 1–23 (MRTLKIFALAVSLLSMLAAPVQA) is a signal peptide.

This sequence belongs to the FlgI family. In terms of assembly, the basal body constitutes a major portion of the flagellar organelle and consists of four rings (L,P,S, and M) mounted on a central rod.

It is found in the periplasm. Its subcellular location is the bacterial flagellum basal body. Assembles around the rod to form the L-ring and probably protects the motor/basal body from shearing forces during rotation. This is Flagellar P-ring protein from Idiomarina loihiensis (strain ATCC BAA-735 / DSM 15497 / L2-TR).